Reading from the N-terminus, the 386-residue chain is Ribosomal RNA small subunit methyltransferase H (386 aa).

Residues 97–99 (GGH), D116, Y143, D167, and Q174 contribute to the S-adenosyl-L-methionine site.

This sequence belongs to the methyltransferase superfamily. RsmH family.

It localises to the cytoplasm. The enzyme catalyses cytidine(1402) in 16S rRNA + S-adenosyl-L-methionine = N(4)-methylcytidine(1402) in 16S rRNA + S-adenosyl-L-homocysteine + H(+). Its function is as follows. Specifically methylates the N4 position of cytidine in position 1402 (C1402) of 16S rRNA. The chain is Ribosomal RNA small subunit methyltransferase H from Mycobacterium avium (strain 104).